The sequence spans 109 residues: C-X-C motif chemokine 13 (109 aa).

The N-terminal stretch at methionine 1–glycine 21 is a signal peptide. 2 disulfide bridges follow: cysteine 32-cysteine 59 and cysteine 34-cysteine 75.

It belongs to the intercrine alpha (chemokine CxC) family. In terms of tissue distribution, found in spleen (B-cell-rich zone or follicles), Peyer patches (strongest within germinal centers and extending to the mantle zone) and lymph nodes (in reticular pattern in follicles).

The protein localises to the secreted. Strongly chemotactic for B-lymphocytes, weakly for spleen monocytes and macrophages but no chemotactic activity for granulocytes. Binds to BLR1/CXCR5. May play a role in directing the migration of B-lymphocytes to follicles in secondary lymphoid organs. This chain is C-X-C motif chemokine 13 (Cxcl13), found in Mus musculus (Mouse).